The following is a 327-amino-acid chain: 2-oxoisovalerate dehydrogenase subunit beta (327 aa).

Residues E29, 58–60, Q82, and 86–89 contribute to the thiamine diphosphate site; these read LAE and FIMP. Residues 83-86 and H129 contribute to the substrate site; that span reads FADF. H129 acts as the Proton acceptor in catalysis.

Heterotetramer of two alpha and two beta chains. Directly associated with ODBA in the E1 complex. Requires thiamine diphosphate as cofactor.

The enzyme catalyses N(6)-[(R)-lipoyl]-L-lysyl-[protein] + 3-methyl-2-oxobutanoate + H(+) = N(6)-[(R)-S(8)-2-methylpropanoyldihydrolipoyl]-L-lysyl-[protein] + CO2. Its function is as follows. The branched-chain alpha-keto dehydrogenase complex catalyzes the overall conversion of alpha-keto acids to acyl-CoA and CO(2). It contains multiple copies of three enzymatic components: branched-chain alpha-keto acid decarboxylase (E1), lipoamide acyltransferase (E2) and lipoamide dehydrogenase (E3). The chain is 2-oxoisovalerate dehydrogenase subunit beta (bfmBAB) from Bacillus subtilis (strain 168).